The sequence spans 202 residues: MKALTTRQQEVYDLVRDHLAQTGMPPTRAEIAQRLGFRSPNAAEEHLKALARKGVIEIVSGASRGIRLLMEEEEGLPLIGRVAAGEPLLAQQHIEGHYKVDPSLFKPGADFLLRVNGMSMRDIGILDGDLLAVHKTQDVRNGQVVVARIDDEVTVKRLKKQGNIVHLLPENSEFQPIVVDLREQSFTIEGLAVGVIRNGDWI.

The H-T-H motif DNA-binding region spans 28–48 (RAEIAQRLGFRSPNAAEEHLK). Residues Ser-119 and Lys-156 each act as for autocatalytic cleavage activity in the active site.

It belongs to the peptidase S24 family. As to quaternary structure, homodimer.

It carries out the reaction Hydrolysis of Ala-|-Gly bond in repressor LexA.. Represses a number of genes involved in the response to DNA damage (SOS response), including recA and lexA. Binds to the 16 bp palindromic sequence 5'-CTGTATATATATACAG-3'. In the presence of single-stranded DNA, RecA interacts with LexA causing an autocatalytic cleavage which disrupts the DNA-binding part of LexA, leading to derepression of the SOS regulon and eventually DNA repair. This is LexA repressor from Yersinia pseudotuberculosis serotype O:1b (strain IP 31758).